Reading from the N-terminus, the 85-residue chain is Exodeoxyribonuclease 7 small subunit (85 aa).

The protein belongs to the XseB family. Heterooligomer composed of large and small subunits.

The protein resides in the cytoplasm. It carries out the reaction Exonucleolytic cleavage in either 5'- to 3'- or 3'- to 5'-direction to yield nucleoside 5'-phosphates.. In terms of biological role, bidirectionally degrades single-stranded DNA into large acid-insoluble oligonucleotides, which are then degraded further into small acid-soluble oligonucleotides. The polypeptide is Exodeoxyribonuclease 7 small subunit (Mycobacterium bovis (strain ATCC BAA-935 / AF2122/97)).